A 1138-amino-acid chain; its full sequence is MSLQSAQYLRQAEVLKAEMTDSKLGPAEVWTSRQALQDLYQKMLVTDLEYALDKKVEQDLWNHAFKNQITTLQGQAKNRANPNRSEVQANLSLFLEAASGFYTQLLQELCTVFNVDLPCRVKSSQLGIISNKQTHSSTIVKPQSSSCSYICQHCLVHLGDIARYRNQTSQAESYYRHAAQLVPSNGQPYNQLAILASSKGDHLTTIFYYCRSIAVKFPFPAASTNLQKALSKALESRDELKTKWGVSDFIKAFIKFHGHVYLSKSLEKLSPLREKLEEQFKRLLFQKAFNSQQLVHVTVINLFQLHHLRDFSNETEQHSYSQDEQLCWTQLLALFMSFLGILCKCPLQNDSQESNNAYPLPAVKVSMDWLRLRPRVFQEAVVDERQYIWPWLISLLNSFHPREDDLSNTNATPLPEEFELQGFLALRPSFRNLDFSKGHQGITGDKEGQQRRIRQQRLISIGKWIADNQPRLIQCENEVGKLLFITEIPELILEDPSEAKENLILQETSVVESLATDGSPGLKSVLSTGRNPSNSCDSGEKPVVTFKENIKPREVNQGRSFPPKEVKSQTELRKTPVSEARKTPVTQTPSQTSNSQFIPIHHPGAFPPLPSRPGFPPPTYVIPPPVAFSMGSGYTFPAGVSVPGTFLQSTAHSPAGNQVQAGKQSHIPYSQQRPSGPGPMNQGPQQSQPPSQPPLTSLPAQPTAQSTSQLQVQALAQQQQSPTKVIPALGKSPPHHSGFQQYQQADASKQLWNPPQVQSPLGKIMPVKQSYYLQTQDPIKLFEPSLQPPVIQQQPLEKKMKPFPMEPYNHNPSEVKVPEFYWDSSYSMADNRAVMAQQPNMDRRSKRSPGVFRPEQDPVPRMPFEDPKSSPLLPPDLLKSLAALEEEEELIFSNPPDLYPALLGPLASLPGRSLFKSLLEKPSELMSHSSSFLSLTGFSVNQERYPNSSMFNEVYGKNLTTSSKAELNPSVASQETSLYSLFEGTPWSPSLPASSDHSTPASQSPHSSNPSSLPSSPPTHNHNSAPFSNFGPIGTPDNRDRRPADRWKTDKPAMGGFGVDYLSATSSSESSWHQASTPSGTWTGHGPSMEDSSAVLMESLKSIWSSSMMHPGPSALEQLLMQQKQKQQRGQGAMNPPH.

Ser-2 is modified (N-acetylserine). TPR repeat units follow at residues Gln-152 to Asn-185 and Gln-187 to Phe-219. Disordered stretches follow at residues Ala-515 to Arg-612, Ser-649 to Ala-745, Gln-838 to Pro-871, Ser-990 to Glu-1090, and Ser-1106 to His-1138. Residue Ser-519 is modified to Phosphoserine. Positions Val-525 to Asp-537 are enriched in polar residues. The segment covering Glu-548–Lys-582 has biased composition (basic and acidic residues). Thr-575 is subject to Phosphothreonine. Composition is skewed to polar residues over residues Pro-584 to Phe-597 and Ser-649 to Arg-673. Low complexity predominate over residues Pro-674–Ser-721. Phosphoserine occurs at positions 732 and 848. The span at Pro-854–Lys-868 shows a compositional bias: basic and acidic residues. Polar residues predominate over residues Ser-990–Thr-999. Low complexity predominate over residues Pro-1000 to Pro-1026. Positions Asp-1037–Lys-1051 are enriched in basic and acidic residues. Polar residues predominate over residues Ser-1063–Trp-1082. The segment covering Gln-1118 to Gly-1132 has biased composition (low complexity).

Part of a complex that contains SMG5, SMG7, PPP2CA, a short isoform of UPF3A (isoform UPF3AS, but not isoform UPF3AL) and phosphorylated UPF1. Interacts with DHX34; the interaction is RNA-independent.

Its subcellular location is the cytoplasm. The protein resides in the nucleus. Plays a role in nonsense-mediated mRNA decay. Recruits UPF1 to cytoplasmic mRNA decay bodies. Together with SMG5 is thought to provide a link to the mRNA degradation machinery involving exonucleolytic pathways, and to serve as an adapter for UPF1 to protein phosphatase 2A (PP2A), thereby triggering UPF1 dephosphorylation. The sequence is that of Nonsense-mediated mRNA decay factor SMG7 from Mus musculus (Mouse).